A 384-amino-acid polypeptide reads, in one-letter code: S-adenosylmethionine synthase (384 aa).

Residue histidine 15 coordinates ATP. Position 17 (aspartate 17) interacts with Mg(2+). Residue glutamate 43 coordinates K(+). The L-methionine site is built by glutamate 56 and glutamine 99. The flexible loop stretch occupies residues 99–109 (QSPDINQGVDR). ATP-binding positions include 164–166 (DAK), 230–231 (RF), aspartate 239, 245–246 (RK), alanine 262, and lysine 266. Residue aspartate 239 participates in L-methionine binding. Lysine 270 contacts L-methionine.

Belongs to the AdoMet synthase family. In terms of assembly, homotetramer; dimer of dimers. Requires Mg(2+) as cofactor. The cofactor is K(+).

It localises to the cytoplasm. It catalyses the reaction L-methionine + ATP + H2O = S-adenosyl-L-methionine + phosphate + diphosphate. The protein operates within amino-acid biosynthesis; S-adenosyl-L-methionine biosynthesis; S-adenosyl-L-methionine from L-methionine: step 1/1. Catalyzes the formation of S-adenosylmethionine (AdoMet) from methionine and ATP. The overall synthetic reaction is composed of two sequential steps, AdoMet formation and the subsequent tripolyphosphate hydrolysis which occurs prior to release of AdoMet from the enzyme. The sequence is that of S-adenosylmethionine synthase from Escherichia coli (strain K12 / DH10B).